A 465-amino-acid chain; its full sequence is MLRSNLCRGSRILARLTTTPRTYTSAATAAAANRGHIIKTYFNRDSTTITFSMEESSKPVSVCFNNVFLRDASHSAKLVTTGELYHNEKLTAPQDIQISEDGKSLVVKWKDGGHHQFPLQFFIDYKGSSFVSPATRKQESRYRPQLWNKRILKDNVKDLLSVSYNEFIDPKDDSKLFQTLVNLQKFGIAFISGTPSSSSEGLTIQKICERIGPIRSTVHGEGTFDVNASQATSVNAHYANKDLPLHTDLPFLENVPGFQILQSLPATEGEDPNTRPMNYFVDAFYATRNVRESDFEAYEALQIVPVNYIYENGDKRYYQSKPLIEHHDINEDNTLLGNYEALIKCINYSPPYQAPFTFGIYDKPSDLNNNLDLNLITTPAKLTERFLFKSFIRGLNLFESHINDFNNQFRLQLPENCCVIFNNRRILHANSLTSSNQQWLKGCYFDSDTFKSKLKFLEEKFPHDK.

The N-terminal 16 residues, 1–16 (MLRSNLCRGSRILARL), are a transit peptide targeting the mitochondrion. The Fe cation site is built by His-246, Asp-248, and His-428.

Belongs to the gamma-BBH/TMLD family. Requires Fe(2+) as cofactor. L-ascorbate serves as cofactor.

It localises to the mitochondrion. This Saccharomyces cerevisiae (strain ATCC 204508 / S288c) (Baker's yeast) protein is Probable oxidoreductase AIM17 (AIM17).